The sequence spans 200 residues: MARFRGSNWKKSRRLGISLSGTGKELEKRPYAPGQHGPNQRKKLSEYGLQLREKQKLRYLYGMTERQFRNTFDIAGKKFGVHGENFMILLASRLDAVVYSLGLARTRRQARQLVNHGHILVDGKRVDIPSYSVKPGQTISVREKSQKLNIIVESVEINNFVPEYLNFDADSLTGTFVRLPERSELPAEINEQLIVEYYSR.

The S4 RNA-binding domain maps to 92 to 155; sequence SRLDAVVYSL…QKLNIIVESV (64 aa).

Belongs to the universal ribosomal protein uS4 family. Part of the 30S ribosomal subunit. Contacts protein S5. The interaction surface between S4 and S5 is involved in control of translational fidelity.

One of the primary rRNA binding proteins, it binds directly to 16S rRNA where it nucleates assembly of the body of the 30S subunit. Its function is as follows. With S5 and S12 plays an important role in translational accuracy. The protein is Small ribosomal subunit protein uS4 of Staphylococcus aureus (strain JH9).